The chain runs to 327 residues: Immediate early response gene 5 protein (327 aa).

Disordered regions lie at residues 59–166 (GPAG…GVFP) and 227–313 (GPAG…DKPV). The segment covering 71–84 (QPGEPAAGPPAGWG) has biased composition (low complexity). Acidic residues predominate over residues 253–262 (GEDDDAEEME). Residues 265–278 (NVANLISIFGSSFS) are compositionally biased toward polar residues.

It belongs to the IER family. Monomer. Homodimer. Associates with the catalytic subunit of protein phosphatase PP2A. Interacts (via N- and C-terminal regions) with PPP2R2B. Interacts with PPP2R2A, PPP2R2C and PPP2R2D. Interacts (via N-terminus) with RPS6KB1. Interacts (via central region) with HSF1; this interaction promotes PPP2CA-induced HSF1 dephosphorylation, leading to enhanced HSF1 transcriptional activity. Expressed in acute myeloid leukemia (AML) cells.

It is found in the nucleus. The protein resides in the cytoplasm. Plays a role as a transcription factor. Mediates positive transcriptional regulation of several chaperone genes during the heat shock response in a HSF1-dependent manner. Mediates negative transcriptional regulation of CDC25B expression. Plays a role in the dephosphorylation of the heat shock factor HSF1 and ribosomal protein S6 kinase (S6K) by the protein phosphatase PP2A. Involved in the regulation of cell proliferation and resistance to thermal stress. Involved in the cell cycle checkpoint and survival in response to ionizing radiation. Associates with chromatin to the CDC25B promoter. The chain is Immediate early response gene 5 protein (IER5) from Homo sapiens (Human).